The sequence spans 193 residues: MAFILGSGSPRRLELLAQLGVTPDDIRPPDIDETPQKGELPRDYCARVTRQKAEAVTSNPEDLVLCADTTVVLGRRIMGKPRDAGEAAEFLLALSGRRHRVITSVALRKQDRLWQKDVVSQVKMKRLSDEELNAYLATGDWEGKAGGYAIQGPAGALIPWISGSFTAIVGLPLAETATLLQTAGYPLYKDTAS.

Aspartate 68 acts as the Proton acceptor in catalysis.

The protein belongs to the Maf family. YhdE subfamily. A divalent metal cation serves as cofactor.

It is found in the cytoplasm. The catalysed reaction is dTTP + H2O = dTMP + diphosphate + H(+). It catalyses the reaction UTP + H2O = UMP + diphosphate + H(+). Its function is as follows. Nucleoside triphosphate pyrophosphatase that hydrolyzes dTTP and UTP. May have a dual role in cell division arrest and in preventing the incorporation of modified nucleotides into cellular nucleic acids. The protein is dTTP/UTP pyrophosphatase of Ruegeria sp. (strain TM1040) (Silicibacter sp.).